Reading from the N-terminus, the 290-residue chain is Acetylglutamate kinase (290 aa).

Substrate-binding positions include 60 to 61 (GG), arginine 82, and asparagine 185.

The protein belongs to the acetylglutamate kinase family. ArgB subfamily.

The protein resides in the cytoplasm. The enzyme catalyses N-acetyl-L-glutamate + ATP = N-acetyl-L-glutamyl 5-phosphate + ADP. Its pathway is amino-acid biosynthesis; L-arginine biosynthesis; N(2)-acetyl-L-ornithine from L-glutamate: step 2/4. Functionally, catalyzes the ATP-dependent phosphorylation of N-acetyl-L-glutamate. In Archaeoglobus fulgidus (strain ATCC 49558 / DSM 4304 / JCM 9628 / NBRC 100126 / VC-16), this protein is Acetylglutamate kinase.